A 129-amino-acid polypeptide reads, in one-letter code: Large ribosomal subunit protein uL22 (129 aa).

The protein belongs to the universal ribosomal protein uL22 family. Part of the 50S ribosomal subunit.

Functionally, this protein binds specifically to 23S rRNA; its binding is stimulated by other ribosomal proteins, e.g. L4, L17, and L20. It is important during the early stages of 50S assembly. It makes multiple contacts with different domains of the 23S rRNA in the assembled 50S subunit and ribosome. The globular domain of the protein is located near the polypeptide exit tunnel on the outside of the subunit, while an extended beta-hairpin is found that lines the wall of the exit tunnel in the center of the 70S ribosome. This chain is Large ribosomal subunit protein uL22, found in Beijerinckia indica subsp. indica (strain ATCC 9039 / DSM 1715 / NCIMB 8712).